The chain runs to 457 residues: Bifunctional protein GlmU (457 aa).

Residues 1–228 (MEGLVTLILA…SEEITGVNSR (228 aa)) form a pyrophosphorylase region. Residues 9–12 (LAAG), Lys-23, Gln-73, and 78–79 (GT) each bind UDP-N-acetyl-alpha-D-glucosamine. Asp-102 contacts Mg(2+). UDP-N-acetyl-alpha-D-glucosamine is bound by residues Gly-139, Glu-154, Asn-169, and Asn-226. Asn-226 lines the Mg(2+) pocket. Residues 229–249 (VQLFEAEKIMRKRINYRHMEN) form a linker region. The N-acetyltransferase stretch occupies residues 250–457 (GVTIVDPDTT…VQERIKKGRL (208 aa)). 2 residues coordinate UDP-N-acetyl-alpha-D-glucosamine: Arg-331 and Lys-349. The active-site Proton acceptor is His-361. The UDP-N-acetyl-alpha-D-glucosamine site is built by Tyr-364 and Asn-375. Residues 384-385 (NY), Ala-421, and Arg-438 contribute to the acetyl-CoA site.

This sequence in the N-terminal section; belongs to the N-acetylglucosamine-1-phosphate uridyltransferase family. In the C-terminal section; belongs to the transferase hexapeptide repeat family. In terms of assembly, homotrimer. It depends on Mg(2+) as a cofactor.

Its subcellular location is the cytoplasm. The enzyme catalyses alpha-D-glucosamine 1-phosphate + acetyl-CoA = N-acetyl-alpha-D-glucosamine 1-phosphate + CoA + H(+). The catalysed reaction is N-acetyl-alpha-D-glucosamine 1-phosphate + UTP + H(+) = UDP-N-acetyl-alpha-D-glucosamine + diphosphate. The protein operates within nucleotide-sugar biosynthesis; UDP-N-acetyl-alpha-D-glucosamine biosynthesis; N-acetyl-alpha-D-glucosamine 1-phosphate from alpha-D-glucosamine 6-phosphate (route II): step 2/2. It functions in the pathway nucleotide-sugar biosynthesis; UDP-N-acetyl-alpha-D-glucosamine biosynthesis; UDP-N-acetyl-alpha-D-glucosamine from N-acetyl-alpha-D-glucosamine 1-phosphate: step 1/1. It participates in bacterial outer membrane biogenesis; LPS lipid A biosynthesis. Functionally, catalyzes the last two sequential reactions in the de novo biosynthetic pathway for UDP-N-acetylglucosamine (UDP-GlcNAc). The C-terminal domain catalyzes the transfer of acetyl group from acetyl coenzyme A to glucosamine-1-phosphate (GlcN-1-P) to produce N-acetylglucosamine-1-phosphate (GlcNAc-1-P), which is converted into UDP-GlcNAc by the transfer of uridine 5-monophosphate (from uridine 5-triphosphate), a reaction catalyzed by the N-terminal domain. In Thermoanaerobacter pseudethanolicus (strain ATCC 33223 / 39E) (Clostridium thermohydrosulfuricum), this protein is Bifunctional protein GlmU.